The following is a 168-amino-acid chain: MNPNRSVAVDKVVVHMGVGEAGDKLVNAERIISEITGNTPVRSVAKQTLPAFGIRKGAPISCRVTLRGEAAEKFLETSIKIVENKINSRAFDKQGNFSFGIEEHTDYPGQSYDPKVGIFGLDVTVVLKRNGVRIARRHIQQKKLPLKQLVTVEDAKLFLKDRYNVEVQ.

It belongs to the universal ribosomal protein uL5 family. As to quaternary structure, part of the 50S ribosomal subunit; contacts the 5S rRNA and probably tRNA. Forms a bridge to the 30S subunit in the 70S ribosome.

Functionally, this is one of the proteins that bind and probably mediate the attachment of the 5S RNA into the large ribosomal subunit, where it forms part of the central protuberance. In the 70S ribosome it contacts protein S13 of the 30S subunit (bridge B1b), connecting the 2 subunits; this bridge is implicated in subunit movement. May contact the P site tRNA; the 5S rRNA and some of its associated proteins might help stabilize positioning of ribosome-bound tRNAs. The protein is Large ribosomal subunit protein uL5 of Methanospirillum hungatei JF-1 (strain ATCC 27890 / DSM 864 / NBRC 100397 / JF-1).